The chain runs to 351 residues: Uroporphyrinogen decarboxylase (351 aa).

Residues 25 to 29, D74, Y151, S206, and H325 contribute to the substrate site; that span reads RQAGR.

It belongs to the uroporphyrinogen decarboxylase family. As to quaternary structure, homodimer.

It is found in the cytoplasm. It catalyses the reaction uroporphyrinogen III + 4 H(+) = coproporphyrinogen III + 4 CO2. It functions in the pathway porphyrin-containing compound metabolism; protoporphyrin-IX biosynthesis; coproporphyrinogen-III from 5-aminolevulinate: step 4/4. In terms of biological role, catalyzes the decarboxylation of four acetate groups of uroporphyrinogen-III to yield coproporphyrinogen-III. The sequence is that of Uroporphyrinogen decarboxylase from Chlorobaculum parvum (strain DSM 263 / NCIMB 8327) (Chlorobium vibrioforme subsp. thiosulfatophilum).